A 110-amino-acid chain; its full sequence is UPF0122 protein SPG_1182 (110 aa).

Belongs to the UPF0122 family.

Its function is as follows. Might take part in the signal recognition particle (SRP) pathway. This is inferred from the conservation of its genetic proximity to ftsY/ffh. May be a regulatory protein. The polypeptide is UPF0122 protein SPG_1182 (Streptococcus pneumoniae serotype 19F (strain G54)).